A 378-amino-acid polypeptide reads, in one-letter code: Holliday junction branch migration complex subunit RuvB 1 (378 aa).

A compositionally biased stretch (polar residues) spans 1–12; sequence MAIISSRDTGQN. The disordered stretch occupies residues 1-62; it reads MAIISSRDTG…PGEAQEESLR (62 aa). A large ATPase domain (RuvB-L) region spans residues 13 to 222; it reads AEGPKRRQQK…FGHVQRLRFY (210 aa). Residues Leu-61, Arg-62, Gly-103, Lys-106, Thr-107, Thr-108, 169 to 171, Arg-212, Tyr-222, and Arg-259 contribute to the ATP site; that span reads EDF. Mg(2+) is bound at residue Thr-107. A small ATPAse domain (RuvB-S) region spans residues 223 to 293; the sequence is EPHELVQIVL…VAAAALELFQ (71 aa). A head domain (RuvB-H) region spans residues 296 to 378; sequence PMGLDWIDRK…EAQSPLPLWS (83 aa). 2 residues coordinate DNA: Arg-351 and Arg-356.

The protein belongs to the RuvB family. As to quaternary structure, homohexamer. Forms an RuvA(8)-RuvB(12)-Holliday junction (HJ) complex. HJ DNA is sandwiched between 2 RuvA tetramers; dsDNA enters through RuvA and exits via RuvB. An RuvB hexamer assembles on each DNA strand where it exits the tetramer. Each RuvB hexamer is contacted by two RuvA subunits (via domain III) on 2 adjacent RuvB subunits; this complex drives branch migration. In the full resolvosome a probable DNA-RuvA(4)-RuvB(12)-RuvC(2) complex forms which resolves the HJ.

It is found in the cytoplasm. The catalysed reaction is ATP + H2O = ADP + phosphate + H(+). Its function is as follows. The RuvA-RuvB-RuvC complex processes Holliday junction (HJ) DNA during genetic recombination and DNA repair, while the RuvA-RuvB complex plays an important role in the rescue of blocked DNA replication forks via replication fork reversal (RFR). RuvA specifically binds to HJ cruciform DNA, conferring on it an open structure. The RuvB hexamer acts as an ATP-dependent pump, pulling dsDNA into and through the RuvAB complex. RuvB forms 2 homohexamers on either side of HJ DNA bound by 1 or 2 RuvA tetramers; 4 subunits per hexamer contact DNA at a time. Coordinated motions by a converter formed by DNA-disengaged RuvB subunits stimulates ATP hydrolysis and nucleotide exchange. Immobilization of the converter enables RuvB to convert the ATP-contained energy into a lever motion, pulling 2 nucleotides of DNA out of the RuvA tetramer per ATP hydrolyzed, thus driving DNA branch migration. The RuvB motors rotate together with the DNA substrate, which together with the progressing nucleotide cycle form the mechanistic basis for DNA recombination by continuous HJ branch migration. Branch migration allows RuvC to scan DNA until it finds its consensus sequence, where it cleaves and resolves cruciform DNA. The protein is Holliday junction branch migration complex subunit RuvB 1 of Synechococcus sp. (strain JA-3-3Ab) (Cyanobacteria bacterium Yellowstone A-Prime).